Consider the following 358-residue polypeptide: Mannonate dehydratase (358 aa).

The protein belongs to the mannonate dehydratase family. It depends on Fe(2+) as a cofactor. Mn(2+) serves as cofactor.

The enzyme catalyses D-mannonate = 2-dehydro-3-deoxy-D-gluconate + H2O. It participates in carbohydrate metabolism; pentose and glucuronate interconversion. Catalyzes the dehydration of D-mannonate. The sequence is that of Mannonate dehydratase from Lachnoclostridium phytofermentans (strain ATCC 700394 / DSM 18823 / ISDg) (Clostridium phytofermentans).